Reading from the N-terminus, the 2338-residue chain is MKRIRWLTPKPATFVVLGCVWISVAQGTILSSCLTSCVTNLGRQLDSGTRYNLSEACIQGCQFWNSIDQEKCALKCNDTYVTICERESCEVGCSNAEGSYEEEVLDNTELPTAPFASSIGSNGVTLRWNPANISGVKYIIQWKYAQLPGSWAYTETVSKLSYMVEPLHPFTEYIFRVVWIFTAQLHLYSPPSPSYRTHPYGVPETAPFITNIESSSPDTVEVSWAPPYFPGGPILGYNLRLISKTQKLDSGTQRTSFQFYSTLPNTTYRFSIAAVNEVGEGPEAESMITTPSPAVQEEEQWLFLSRKTSLRKRSLKYLVDEAHCLWSDAIRHNITGISVNTQQEVVYFSEGTIIWMKGAANMSDVSDLRIFYRGSALVSSISVDWLYQRMYFIMDNRVHVCDLKHCSNLEEITPFSIVAPQKVVVDSYNGYVFYLLRDGIYRVHLPLPSVRDTKAVRIVESGTLKDFAVKPQSKRIIYFNGTMQVFMSTFLDGSAFHRVLPWVPLADVKSFACENNDFLITDGKAIFQQDSLSFNEFIVGCDLSHIEEFGFGNLVIFGSSVQSYPLPGHPQEVSVLFGSREALIQWKPPILAIGASPSAWQNWTYEVKVSSQDILETTQVFLNISRTVLNVPKLQSSTKYMVSVRASSPKGPGPWSEPSVGTTLVPATEPPFIMAVKEDGLWSKPLSSFGPGEFLSSDVGNVSDMDWYNNSLYYSDTKGNVYVRPLNGMDISENYHISSIAGACALAFEWLGHFLYWAGKTYVIQRQSVLTGHTDIVTHVKLLVNDMAVDPVGGYLYWTTLYSVESTRLNGESSLVLQAQPWLSGKKVIALTLDLSDGLLYWLVQDNQCIHLYTAVLRGWSGADATITEFAAWSTSEISQNALMYYSGRLFWINGFRIITAQEIGQRTSVSVSEPGKFNQFTIIQTSLKPLPGNFSSTPTVIPDSVQESSFRIEGHTSSFRILWNEPPAVDWGIVFYSVEFSAHSKFLAIEQQSLPVFTVEGLEPYALFNLSVTPYTYWGKGQKTSLSFRAPESVPSAPENPRIFILSLGRYTRKNEVVVEFRWNKPKHENGVLTKSEIFYHISKQSGTNKSTEDWVSVSVTPPVMSFQLEAMSPGYIVSFQVRVFTSKGPGPFSDIVMSKTSEIKPCPYLISLLGNKIEFLDMDQNQVVWTFSLEGAVSTVGYTADDEMGYFAQGDALFLLNLHNHSSSKLFQDVLASDIAVIAVDWIARHLYFALKASQDGTQIFDVDLEHKVKSPREVKICKSHTAIISFSMYPLLSRLYWTEVSDLGYQMFYCNISSHTLHHVLQPKASNQHGRRQCSCNVTESELSGAMTVDTSDPDRPWIYFTKQQEIWAMDLEGCQCWKVIMVPATPGKRIISLTVDGEFIYWITTMKDDTEIYQAKKGSGAILSQVKAPRSKHILAYSSALQPFPDKAYLSVASNMVEASILNATNTSLILKLPPVKTNLTWHGITTPTSTYLVYYMEANRANSSDRKHNMLESQENVARIEGLQPFSTYVIQIAVKNYYSDPLEHLSLGKEIQGKTKSGVPGAVCHINATVLSDTSLLVFWTESHKPNGPKELVRYQLVMSYLAPIPETPLRQDEFPSARLSLLVTKLSGGQQYVLKILACHSEEMWCTESHPVSVNMFDTPEKPSALVPENTSLLLDWKAPSNANLTRFWFELQKWKYSEFYHVKASCSQGPVYVCNIANLQPYTPYNIRVVVVYTTGENSSSIPESFKTKAGVPSKPGIPKLLEGSKNSIQWEKAEDNGNRLMYYTLEVRKSISNDSRDQSLRWTAVFNGSCSSICTWRSKNLKGTFQFRAVASNAIGFGEYSEISEDITLVEDGFWITETSFILTIIVGIFLVATVPLTFVWHRSLKNHKATKEGLSVLNDNDQELAELRGLAAGVGLANACYAVHTLPTQEEIESLPAFPREKLSLRLLLGSGAFGEVYEGTAVDILGRGSGEIKVAVKTLKKGSTDQEKIEFLKEAHLMSKFNHPNILKQLGVCLLSEPQYIILELMEGGDLLSYLRKARGTTLSGPLLTLADLVELCVDISKGCVYLEQMHFIHRDLAARNCLVSVKDYTSPRVVKIGDFGLAREIYKHDYYRKRGEGLLPVRWMAPENLMDGIFTSQSDVWSFGILVWEILTLGHQPYPAHSNLDVLNYVQAGGRLEPPRNCPDDLWNLMFRCWAQEPDQRPTFYNIQDQLQLFRNVSLNNVSHCGQAAPAGGVINKGFEGEDNEMATLNSDDTMPVALMETRNQEGLNYMVLATKCSQSEDRYEGPLGSKESGLHDLKKDERQPADKDFCQQPQVAYGSPGHSEGLNYACLAHSGHGDVSE.

The first 27 residues, 1 to 27 (MKRIRWLTPKPATFVVLGCVWISVAQG), serve as a signal peptide directing secretion. Topologically, residues 28–1853 (TILSSCLTSC…EDGFWITETS (1826 aa)) are extracellular. 2 N-linked (GlcNAc...) asparagine glycosylation sites follow: N52 and N77. 2 consecutive Fibronectin type-III domains span residues 110–205 (LPTA…VPET) and 206–294 (APFI…PSPA). 6 N-linked (GlcNAc...) asparagine glycosylation sites follow: N333, N361, N480, N623, N934, and N1010. The Fibronectin type-III 3 domain maps to 566-666 (LPGHPQEVSV…EPSVGTTLVP (101 aa)). 2 consecutive Fibronectin type-III domains span residues 942–1037 (IPDS…SVPS) and 1038–1145 (APEN…TSEI). A glycan (N-linked (GlcNAc...) asparagine) is linked at N1298. 4 Fibronectin type-III domains span residues 1440 to 1548 (VASN…TKSG), 1549 to 1648 (VPGA…VNMF), 1650 to 1743 (TPEK…TKAG), and 1744 to 1845 (VPSK…LVED). The N-linked (GlcNAc...) asparagine glycan is linked to N1675. Residues 1854-1874 (FILTIIVGIFLVATVPLTFVW) traverse the membrane as a helical segment. Residues 1875-2338 (HRSLKNHKAT…AHSGHGDVSE (464 aa)) are Cytoplasmic-facing. Residues 1937–2210 (LSLRLLLGSG…YNIQDQLQLF (274 aa)) form the Protein kinase domain. Residues 1943-1951 (LGSGAFGEV) and K1972 contribute to the ATP site. D2071 (proton acceptor) is an active-site residue. Residue Y2266 is modified to Phosphotyrosine; by autocatalysis. The disordered stretch occupies residues 2277 to 2314 (EDRYEGPLGSKESGLHDLKKDERQPADKDFCQQPQVAY). Positions 2289 to 2306 (SGLHDLKKDERQPADKDF) are enriched in basic and acidic residues. Y2325 carries the phosphotyrosine; by autocatalysis modification.

This sequence belongs to the protein kinase superfamily. Tyr protein kinase family. Insulin receptor subfamily. Interacts with PTPN11; may activate the PI3 kinase-mTOR signaling pathway. Interacts with VAV3; constitutive interaction mediating VAV3 phosphorylation. Interacts with PTPN6 (via SH2 1 domain); the interaction is direct and promotes ROS1 dephosphorylation. In terms of processing, phosphorylated. Probably autophosphorylates. Phosphorylation at Tyr-2266 is required for the interaction with PTPN6 that mediates ROS1 dephosphorylation. Phosphorylation at Tyr-2266 stimulates the kinase activity and the activation of the ERK1 signaling cascade. Phosphorylation at Tyr-2266 and/or Tyr-2325 recruits PTPN11. As to expression, expressed in heart, lung, kidney and testis.

It is found in the cell membrane. It catalyses the reaction L-tyrosyl-[protein] + ATP = O-phospho-L-tyrosyl-[protein] + ADP + H(+). Inhibited by dephosphorylation by PTPN6. Its function is as follows. Orphan receptor tyrosine kinase (RTK) that plays a role in epithelial cell differentiation and regionalization of the proximal epididymal epithelium. NELL2 is an endogenous ligand for ROS1. Upon endogenous stimulation by NELL2, ROS1 activates the intracellular signaling pathway and triggers epididymal epithelial differentiation and subsequent sperm maturation. May activate several downstream signaling pathways related to cell differentiation, proliferation, growth and survival including the PI3 kinase-mTOR signaling pathway. Mediates the phosphorylation of PTPN11, an activator of this pathway. May also phosphorylate and activate the transcription factor STAT3 to control anchorage-independent cell growth. Mediates the phosphorylation and the activation of VAV3, a guanine nucleotide exchange factor regulating cell morphology. May activate other downstream signaling proteins including AKT1, MAPK1, MAPK3, IRS1 and PLCG2. This is Proto-oncogene tyrosine-protein kinase ROS (Ros1) from Rattus norvegicus (Rat).